A 143-amino-acid chain; its full sequence is Transcriptional regulator MraZ (143 aa).

SpoVT-AbrB domains follow at residues 5–47 (TYTP…PRSE) and 76–119 (TDEQ…DAQA).

This sequence belongs to the MraZ family. Forms oligomers.

The protein localises to the cytoplasm. It localises to the nucleoid. This Mycobacterium ulcerans (strain Agy99) protein is Transcriptional regulator MraZ.